A 147-amino-acid chain; its full sequence is MEQTYVMVKPDGVERGLIGEIVAKIEKKGIKLVAGKLMQIDRTLAEQHYAEHIGKPFFEDLIGFITSGPVFAMVLEGDDVIKTARRMMGKTNPLEADPGTIRAEYAIHTNRNVIHGSDSPESAKREIQLFFEPHEILSYEKAVDTWI.

The ATP site is built by Lys-9, Phe-57, Arg-85, Thr-91, Arg-102, and Asn-112. The active-site Pros-phosphohistidine intermediate is the His-115.

It belongs to the NDK family. In terms of assembly, homotetramer. It depends on Mg(2+) as a cofactor.

The protein localises to the cytoplasm. The enzyme catalyses a 2'-deoxyribonucleoside 5'-diphosphate + ATP = a 2'-deoxyribonucleoside 5'-triphosphate + ADP. It carries out the reaction a ribonucleoside 5'-diphosphate + ATP = a ribonucleoside 5'-triphosphate + ADP. In terms of biological role, major role in the synthesis of nucleoside triphosphates other than ATP. The ATP gamma phosphate is transferred to the NDP beta phosphate via a ping-pong mechanism, using a phosphorylated active-site intermediate. This chain is Nucleoside diphosphate kinase, found in Listeria innocua serovar 6a (strain ATCC BAA-680 / CLIP 11262).